The chain runs to 815 residues: Probable receptor-like protein kinase At2g39360 (815 aa).

The first 26 residues, 1–26 (MINLKLFLELKLCFLITLLCSSHISS), serve as a signal peptide directing secretion. The Extracellular segment spans residues 27-407 (VSDTFFINCG…SSSNKSSNTS (381 aa)). Asn-40, Asn-45, Asn-125, Asn-146, Asn-209, Asn-244, Asn-277, Asn-331, Asn-355, Asn-401, and Asn-405 each carry an N-linked (GlcNAc...) asparagine glycan. A helical membrane pass occupies residues 408-428 (VGLIAGLSAALCVALVFGVVV). The Cytoplasmic segment spans residues 429–815 (SWWCIRKRRR…FAQMVREETR (387 aa)). A Protein kinase domain is found at 487–761 (FDESLVIGVG…GDLLWNLEFM (275 aa)). ATP-binding positions include 493 to 501 (IGVGGFGKV) and Lys-515. The active-site Proton acceptor is Asp-612.

Belongs to the protein kinase superfamily. Ser/Thr protein kinase family.

The protein localises to the cell membrane. This Arabidopsis thaliana (Mouse-ear cress) protein is Probable receptor-like protein kinase At2g39360.